A 321-amino-acid chain; its full sequence is MARNKIALIGAGQIGGTLALLAGMKALGDIVLFDVAEGVPEGKALDLAELTPVEGFDAAYAGASSYDAISGADVVIVTAGVARKPGMSRDDLLAINLKVMEQVGAGIRKYAPDAFVICITNPLDAMVWALQRSSGLPPEKVVGMAGVLDSARLRYFLAEEFGVSVEDVTAFVMGGHGDTMVPLVRYSTVGGIPVPDLIRMGWTSEERIAAIVQRTRDGGAEIVNLLKSGSAFYAPAASAIAMAESYLRDKKRVLPVAALLDGEYGLRDIYVGVPAVIGARGVERIVEVELDRSERAMFDRSVAAVEGLVEACLKIAPGLGK.

Residues G10 to G15 and D34 each bind NAD(+). Residues R83 and R89 each coordinate substrate. NAD(+) is bound by residues N96 and I119–N121. Positions 121 and 152 each coordinate substrate. The active-site Proton acceptor is H176.

Belongs to the LDH/MDH superfamily. MDH type 3 family.

The enzyme catalyses (S)-malate + NAD(+) = oxaloacetate + NADH + H(+). Catalyzes the reversible oxidation of malate to oxaloacetate. The polypeptide is Malate dehydrogenase (Xanthobacter autotrophicus (strain ATCC BAA-1158 / Py2)).